The chain runs to 517 residues: Crotonobetaine/carnitine--CoA ligase (517 aa).

Belongs to the ATP-dependent AMP-binding enzyme family.

The enzyme catalyses 4-(trimethylamino)butanoate + ATP + CoA = 4-(trimethylamino)butanoyl-CoA + AMP + diphosphate. It catalyses the reaction crotonobetaine + ATP + CoA = crotonobetainyl-CoA + AMP + diphosphate. It carries out the reaction (R)-carnitine + ATP + CoA = (R)-carnitinyl-CoA + AMP + diphosphate. It functions in the pathway amine and polyamine metabolism; carnitine metabolism. Catalyzes the transfer of CoA to carnitine, generating the initial carnitinyl-CoA needed for the CaiB reaction cycle. Also has activity toward crotonobetaine and gamma-butyrobetaine. This Escherichia fergusonii (strain ATCC 35469 / DSM 13698 / CCUG 18766 / IAM 14443 / JCM 21226 / LMG 7866 / NBRC 102419 / NCTC 12128 / CDC 0568-73) protein is Crotonobetaine/carnitine--CoA ligase.